Reading from the N-terminus, the 321-residue chain is Phospho-N-acetylmuramoyl-pentapeptide-transferase (321 aa).

9 helical membrane passes run 1-21 (MSLL…FALM), 53-73 (TMGG…VGGW), 77-97 (LQPT…LGFW), 110-130 (GLKA…LTLV), 145-165 (LGVW…LVGF), 174-194 (GLDG…AVIA), 200-220 (YNVM…FVYN), 226-248 (IFMG…ILLH), and 301-321 (IDIV…ATII).

It belongs to the glycosyltransferase 4 family. MraY subfamily. It depends on Mg(2+) as a cofactor.

Its subcellular location is the cell membrane. The enzyme catalyses UDP-N-acetyl-alpha-D-muramoyl-L-alanyl-gamma-D-glutamyl-L-lysyl-D-alanyl-D-alanine + di-trans,octa-cis-undecaprenyl phosphate = Mur2Ac(oyl-L-Ala-gamma-D-Glu-L-Lys-D-Ala-D-Ala)-di-trans,octa-cis-undecaprenyl diphosphate + UMP. Its pathway is cell wall biogenesis; peptidoglycan biosynthesis. Catalyzes the initial step of the lipid cycle reactions in the biosynthesis of the cell wall peptidoglycan: transfers peptidoglycan precursor phospho-MurNAc-pentapeptide from UDP-MurNAc-pentapeptide onto the lipid carrier undecaprenyl phosphate, yielding undecaprenyl-pyrophosphoryl-MurNAc-pentapeptide, known as lipid I. In Lactiplantibacillus plantarum (strain ATCC BAA-793 / NCIMB 8826 / WCFS1) (Lactobacillus plantarum), this protein is Phospho-N-acetylmuramoyl-pentapeptide-transferase.